We begin with the raw amino-acid sequence, 100 residues long: Small ribosomal subunit protein uS14c (100 aa).

The protein belongs to the universal ribosomal protein uS14 family. Part of the 30S ribosomal subunit.

It is found in the plastid. Its subcellular location is the chloroplast. Its function is as follows. Binds 16S rRNA, required for the assembly of 30S particles. The protein is Small ribosomal subunit protein uS14c of Capsella bursa-pastoris (Shepherd's purse).